The primary structure comprises 376 residues: Chaperone protein DnaJ (376 aa).

Residues 5 to 70 enclose the J domain; sequence DYYEVLGVAK…QKRAAYDQYG (66 aa). A CR-type zinc finger spans residues 136–214; that stretch reads GYDTQIRVPS…CHGSGKVKET (79 aa). Zn(2+)-binding residues include Cys149, Cys152, Cys166, Cys169, Cys188, Cys191, Cys202, and Cys205. 4 CXXCXGXG motif repeats span residues 149-156, 166-173, 188-195, and 202-209; these read CEVCHGSG, CPTCHGQG, CPKCHGTG, and CAHCHGSG.

Belongs to the DnaJ family. In terms of assembly, homodimer. Zn(2+) serves as cofactor.

Its subcellular location is the cytoplasm. Its function is as follows. Participates actively in the response to hyperosmotic and heat shock by preventing the aggregation of stress-denatured proteins and by disaggregating proteins, also in an autonomous, DnaK-independent fashion. Unfolded proteins bind initially to DnaJ; upon interaction with the DnaJ-bound protein, DnaK hydrolyzes its bound ATP, resulting in the formation of a stable complex. GrpE releases ADP from DnaK; ATP binding to DnaK triggers the release of the substrate protein, thus completing the reaction cycle. Several rounds of ATP-dependent interactions between DnaJ, DnaK and GrpE are required for fully efficient folding. Also involved, together with DnaK and GrpE, in the DNA replication of plasmids through activation of initiation proteins. This Burkholderia multivorans (strain ATCC 17616 / 249) protein is Chaperone protein DnaJ.